Consider the following 198-residue polypeptide: Recombination protein RecR (198 aa).

The C4-type zinc finger occupies 57 to 72; that stretch reads CSVCGHITENDPCYIC. Residues 80–175 form the Toprim domain; sequence SVICVVEDDK…KVTRLAQGLS (96 aa).

It belongs to the RecR family.

Functionally, may play a role in DNA repair. It seems to be involved in an RecBC-independent recombinational process of DNA repair. It may act with RecF and RecO. The protein is Recombination protein RecR of Staphylococcus aureus (strain JH1).